A 1070-amino-acid polypeptide reads, in one-letter code: DNA-directed RNA polymerase subunit beta (1070 aa).

This sequence belongs to the RNA polymerase beta chain family. In plastids the minimal PEP RNA polymerase catalytic core is composed of four subunits: alpha, beta, beta', and beta''. When a (nuclear-encoded) sigma factor is associated with the core the holoenzyme is formed, which can initiate transcription.

The protein localises to the plastid. It localises to the chloroplast. The enzyme catalyses RNA(n) + a ribonucleoside 5'-triphosphate = RNA(n+1) + diphosphate. Functionally, DNA-dependent RNA polymerase catalyzes the transcription of DNA into RNA using the four ribonucleoside triphosphates as substrates. The polypeptide is DNA-directed RNA polymerase subunit beta (Piper cenocladum (Ant piper)).